A 358-amino-acid polypeptide reads, in one-letter code: Peptide chain release factor 1 (358 aa).

At glutamine 234 the chain carries N5-methylglutamine.

Belongs to the prokaryotic/mitochondrial release factor family. Post-translationally, methylated by PrmC. Methylation increases the termination efficiency of RF1.

The protein resides in the cytoplasm. Peptide chain release factor 1 directs the termination of translation in response to the peptide chain termination codons UAG and UAA. In Akkermansia muciniphila (strain ATCC BAA-835 / DSM 22959 / JCM 33894 / BCRC 81048 / CCUG 64013 / CIP 107961 / Muc), this protein is Peptide chain release factor 1.